We begin with the raw amino-acid sequence, 363 residues long: Protein-arginine kinase (363 aa).

In terms of domain architecture, Phosphagen kinase C-terminal spans 24–254; sequence IVLSSRIRLA…AQLIEQERSA (231 aa). 27 to 31 serves as a coordination point for ATP; the sequence is SSRIR. A phosphoarginine; by autocatalysis mark is found at arginine 29, arginine 40, and arginine 86. Residues histidine 92, arginine 125, and 176–180 contribute to the ATP site; that span reads RASVM. Arginine 190 bears the Phosphoarginine; by autocatalysis mark. Residue 207–212 coordinates ATP; it reads RGIYGE. Arginine 255, arginine 269, and arginine 272 each carry phosphoarginine; by autocatalysis. Positions 337–342 match the RDXXRA motif of the pArg binding pocket involved in allosteric regulation motif; sequence RDIRRA. Arginine 346 carries the post-translational modification Phosphoarginine; by autocatalysis.

The protein belongs to the ATP:guanido phosphotransferase family. Interacts with CtsR in its autophosphorylated form. Interacts with McsA in nonstressed as well as in heat-stressed cells, whereas strongly interacts with ClpC only in nonstressed cells. Autophosphorylated on Arg residues. Phosphorylation on Arg-40 and Arg-86 are up-regulated upon stress conditions.

It localises to the cytoplasm. The enzyme catalyses L-arginyl-[protein] + ATP = N(omega)-phospho-L-arginyl-[protein] + ADP + H(+). Appears to be allosterically activated by the binding of pArg-containing polypeptides to the pArg-binding pocket localized in the C-terminal domain of McsB. The McsB kinase is inhibited in nonstressed cells by direct interaction with ClpC; upon heat exposure, the interaction of McsB with ClpC is dramatically decreased, leading to McsB release and activation during heat stress. Its kinase activity is counteracted by the protein-arginine-phosphatase YwlE in vivo. Requires McsA for full kinase activity. Functionally, catalyzes the specific phosphorylation of arginine residues in a large number of proteins. Is part of the bacterial stress response system, where it is involved in regulating the global heat shock repressor CtsR; phosphorylates arginine residues in the winged helix-turn-helix domain of CtsR, thereby preventing its binding to DNA and consequently inducing the expression of repressed genes. The transcriptional repressor HrcA, the chaperone GroEL, the unfoldase ClpC, together with several ribosomal subunits, represent other physiological targets of McsB under stress conditions. Protein arginine phosphorylation has a physiologically important role and is involved in the regulation of many critical cellular processes, such as protein homeostasis, motility, competence, and stringent and stress responses, by regulating gene expression and protein activity. Functions as an adapter whose kinase activity is required for ClpCP-mediated degradation of CtsR during heat stress. Is required for the delocalization of competence proteins from the cell poles, probably via a role in the degradation of anchor proteins. The protein is Protein-arginine kinase of Bacillus subtilis (strain 168).